A 306-amino-acid chain; its full sequence is Elongation factor Ts (306 aa).

Residues 81-84 form an involved in Mg(2+) ion dislocation from EF-Tu region; that stretch reads TDFV.

It belongs to the EF-Ts family.

The protein localises to the cytoplasm. Its function is as follows. Associates with the EF-Tu.GDP complex and induces the exchange of GDP to GTP. It remains bound to the aminoacyl-tRNA.EF-Tu.GTP complex up to the GTP hydrolysis stage on the ribosome. This chain is Elongation factor Ts, found in Polaromonas naphthalenivorans (strain CJ2).